A 108-amino-acid polypeptide reads, in one-letter code: ATP synthase peripheral stalk subunit F6, mitochondrial (108 aa).

A mitochondrion-targeting transit peptide spans 1-32; the sequence is MILQRLFRFSSVIRSAVSVHLRRNIGVTAVAF. N6-acetyllysine is present on residues K41 and K46. S65 carries the phosphoserine modification. The residue at position 79 (K79) is an N6-acetyllysine. An N6-acetyllysine; alternate mark is found at K94 and K99. K94 and K99 each carry N6-succinyllysine; alternate. Residue K105 is modified to N6-acetyllysine.

The protein belongs to the eukaryotic ATPase subunit F6 family. As to quaternary structure, component of the ATP synthase complex composed at least of ATP5F1A/subunit alpha, ATP5F1B/subunit beta, ATP5MC1/subunit c (homooctomer), MT-ATP6/subunit a, MT-ATP8/subunit 8, ATP5ME/subunit e, ATP5MF/subunit f, ATP5MG/subunit g, ATP5MK/subunit k, ATP5MJ/subunit j, ATP5F1C/subunit gamma, ATP5F1D/subunit delta, ATP5F1E/subunit epsilon, ATP5PF/subunit F6, ATP5PB/subunit b, ATP5PD/subunit d, ATP5PO/subunit OSCP. ATP synthase complex consists of a soluble F(1) head domain (subunits alpha(3) and beta(3)) - the catalytic core - and a membrane F(0) domain - the membrane proton channel (subunits c, a, 8, e, f, g, k and j). These two domains are linked by a central stalk (subunits gamma, delta, and epsilon) rotating inside the F1 region and a stationary peripheral stalk (subunits F6, b, d, and OSCP).

Its subcellular location is the mitochondrion. It is found in the mitochondrion inner membrane. Its function is as follows. Subunit F6, of the mitochondrial membrane ATP synthase complex (F(1)F(0) ATP synthase or Complex V) that produces ATP from ADP in the presence of a proton gradient across the membrane which is generated by electron transport complexes of the respiratory chain. ATP synthase complex consist of a soluble F(1) head domain - the catalytic core - and a membrane F(1) domain - the membrane proton channel. These two domains are linked by a central stalk rotating inside the F(1) region and a stationary peripheral stalk. During catalysis, ATP synthesis in the catalytic domain of F(1) is coupled via a rotary mechanism of the central stalk subunits to proton translocation. In vivo, can only synthesize ATP although its ATP hydrolase activity can be activated artificially in vitro. Part of the complex F(0) domain. Part of the complex F(0) domain and the peripheric stalk, which acts as a stator to hold the catalytic alpha(3)beta(3) subcomplex and subunit a/ATP6 static relative to the rotary elements. The chain is ATP synthase peripheral stalk subunit F6, mitochondrial from Homo sapiens (Human).